The chain runs to 388 residues: Outer membrane protein assembly factor BamB (388 aa).

The signal sequence occupies residues 1–21 (MILGWTQRIFTLLVVVTLLAA). Residue Cys-22 is the site of N-palmitoyl cysteine attachment. Cys-22 carries S-diacylglycerol cysteine lipidation.

The protein belongs to the BamB family. As to quaternary structure, part of the Bam complex.

It is found in the cell outer membrane. Functionally, part of the outer membrane protein assembly complex, which is involved in assembly and insertion of beta-barrel proteins into the outer membrane. The polypeptide is Outer membrane protein assembly factor BamB (Kangiella koreensis (strain DSM 16069 / JCM 12317 / KCTC 12182 / SW-125)).